Here is a 364-residue protein sequence, read N- to C-terminus: MKFNEFLNHLSNYEPGKDIEVIAKEYGVKEVIKLASNENPFGTPPKAIECLRQNANKAHLYPDDSMIELKSTLAQKYKVQNENIIIGAGSDQVIEFAIHAKLNSKNAFLQAGVTFAMYEIYAKQCGAKCYKTQSITHDLNEFKKLYEAHKDEIKLIFLCLPNNPLGECLDASEVTKFIKGVDEDCLVVIDAAYNEFASFKDSKKHLEPCELIKEFDNVLYLGTFSKLYGLGGLRIGYGIANANIISAFYKLRAPFNVSNLALKAAVAAINDDEFAKKTLENNFSQMELYKEFAKKHNIKIIDSYTNFITYFFNEKNSTDLSEKLLKKGIIIRNLKSYGLNAIRITIGTSYENEKFFTEFDKILR.

K226 bears the N6-(pyridoxal phosphate)lysine mark.

Belongs to the class-II pyridoxal-phosphate-dependent aminotransferase family. Histidinol-phosphate aminotransferase subfamily. In terms of assembly, homodimer. Pyridoxal 5'-phosphate serves as cofactor.

It carries out the reaction L-histidinol phosphate + 2-oxoglutarate = 3-(imidazol-4-yl)-2-oxopropyl phosphate + L-glutamate. The protein operates within amino-acid biosynthesis; L-histidine biosynthesis; L-histidine from 5-phospho-alpha-D-ribose 1-diphosphate: step 7/9. This chain is Histidinol-phosphate aminotransferase, found in Campylobacter jejuni (strain RM1221).